The chain runs to 205 residues: Histone H1, early embryonic (205 aa).

2 disordered regions span residues 1-21 and 94-205; these read MAEKNSSKKVTTKKPAAHPPA and AKAQ…AKSK. The 75-residue stretch at 17 to 91 folds into the H15 domain; that stretch reads AHPPAAEMVA…GASGSFKVNV (75 aa). A compositionally biased stretch (basic and acidic residues) spans 98–124; sequence ASEKAKKEKEKAKLLAQREKAKEKGCS. Composition is skewed to basic residues over residues 135-150 and 157-205; these read PKKVKAAPKKAKKPVK and EKKK…AKSK.

Belongs to the histone H1/H5 family.

Its subcellular location is the nucleus. The protein resides in the chromosome. Its function is as follows. Histones H1 are necessary for the condensation of nucleosome chains into higher-order structures. The sequence is that of Histone H1, early embryonic from Strongylocentrotus purpuratus (Purple sea urchin).